Here is a 110-residue protein sequence, read N- to C-terminus: METIAKHRYARTSAQKARLVADLIRGKKVSAALEILTFTNKKAAALVKKVLESAIANAEHNDGADVDDLKVAKIFVDEGPSMKRVMPRAKGRADRILKRTSHITVVVSDR.

Belongs to the universal ribosomal protein uL22 family. Part of the 50S ribosomal subunit.

Its function is as follows. This protein binds specifically to 23S rRNA; its binding is stimulated by other ribosomal proteins, e.g. L4, L17, and L20. It is important during the early stages of 50S assembly. It makes multiple contacts with different domains of the 23S rRNA in the assembled 50S subunit and ribosome. The globular domain of the protein is located near the polypeptide exit tunnel on the outside of the subunit, while an extended beta-hairpin is found that lines the wall of the exit tunnel in the center of the 70S ribosome. The polypeptide is Large ribosomal subunit protein uL22 (Glaesserella parasuis serovar 5 (strain SH0165) (Haemophilus parasuis)).